We begin with the raw amino-acid sequence, 277 residues long: 3-methyl-2-oxobutanoate hydroxymethyltransferase (277 aa).

Mg(2+) is bound by residues Asp49 and Asp88. 3-methyl-2-oxobutanoate-binding positions include 49–50, Asp88, and Lys118; that span reads DS. A Mg(2+)-binding site is contributed by Glu120. The active-site Proton acceptor is the Glu186.

This sequence belongs to the PanB family. As to quaternary structure, homodecamer; pentamer of dimers. Mg(2+) serves as cofactor.

The protein resides in the cytoplasm. The enzyme catalyses 3-methyl-2-oxobutanoate + (6R)-5,10-methylene-5,6,7,8-tetrahydrofolate + H2O = 2-dehydropantoate + (6S)-5,6,7,8-tetrahydrofolate. The protein operates within cofactor biosynthesis; (R)-pantothenate biosynthesis; (R)-pantoate from 3-methyl-2-oxobutanoate: step 1/2. Catalyzes the reversible reaction in which hydroxymethyl group from 5,10-methylenetetrahydrofolate is transferred onto alpha-ketoisovalerate to form ketopantoate. This chain is 3-methyl-2-oxobutanoate hydroxymethyltransferase, found in Cereibacter sphaeroides (strain ATCC 17029 / ATH 2.4.9) (Rhodobacter sphaeroides).